The following is an 864-amino-acid chain: DNA mismatch repair protein MutS (864 aa).

Residue 623 to 630 coordinates ATP; that stretch reads GPNMGGKS.

This sequence belongs to the DNA mismatch repair MutS family.

This protein is involved in the repair of mismatches in DNA. It is possible that it carries out the mismatch recognition step. This protein has a weak ATPase activity. The sequence is that of DNA mismatch repair protein MutS from Polaromonas sp. (strain JS666 / ATCC BAA-500).